The sequence spans 406 residues: Testis-specific Y-encoded-like protein 4 (406 aa).

4 disordered regions span residues 1 to 63, 81 to 121, 161 to 189, and 387 to 406; these read MNGV…EHCG, GLED…AKPK, EAGA…TRPR, and VRVP…FQSG. Polar residues predominate over residues 8 to 20; the sequence is NELSLANTTTPSH. A compositionally biased stretch (low complexity) spans 93 to 102; sequence DAPSAPVAAD. The segment covering 167–188 has biased composition (basic and acidic residues); it reads QEKKGLQKEKKVAGGGKEETRP.

This sequence belongs to the nucleosome assembly protein (NAP) family.

The protein is Testis-specific Y-encoded-like protein 4 (Tspyl4) of Mus musculus (Mouse).